The following is a 221-amino-acid chain: Vesicle-associated membrane protein 714 (221 aa).

Position 2 is an N-acetylalanine (Ala2). Over 2–190 the chain is Cytoplasmic; that stretch reads AIVYAVVARG…RRALWMKNAK (189 aa). Positions 7-112 constitute a Longin domain; that stretch reads VVARGTVVLA…AMNDEFSRVL (106 aa). Residues 127 to 187 enclose the v-SNARE coiled-coil homology domain; that stretch reads TLNRVRGEVS…KRLRRALWMK (61 aa). The chain crosses the membrane as a helical; Anchor for type IV membrane protein span at residues 191–211; that stretch reads LLVLLTCLIVFLLYIIIASFC. Residues 212 to 221 are Vesicular-facing; the sequence is GGITLPSCRS.

It belongs to the synaptobrevin family. In terms of tissue distribution, highly expressed in leaves, stems and roots. Detected in flowers.

It is found in the golgi apparatus membrane. Involved in the targeting and/or fusion of transport vesicles to their target membrane. This chain is Vesicle-associated membrane protein 714, found in Arabidopsis thaliana (Mouse-ear cress).